A 186-amino-acid chain; its full sequence is Imidazole glycerol phosphate synthase subunit HisH (186 aa).

In terms of domain architecture, Glutamine amidotransferase type-1 spans 1–186; that stretch reads MIAIIDYGSG…KLLRNFGELA (186 aa). The Nucleophile role is filled by C72. Catalysis depends on residues H167 and E169.

As to quaternary structure, heterodimer of HisH and HisF.

The protein resides in the cytoplasm. The catalysed reaction is 5-[(5-phospho-1-deoxy-D-ribulos-1-ylimino)methylamino]-1-(5-phospho-beta-D-ribosyl)imidazole-4-carboxamide + L-glutamine = D-erythro-1-(imidazol-4-yl)glycerol 3-phosphate + 5-amino-1-(5-phospho-beta-D-ribosyl)imidazole-4-carboxamide + L-glutamate + H(+). It catalyses the reaction L-glutamine + H2O = L-glutamate + NH4(+). It participates in amino-acid biosynthesis; L-histidine biosynthesis; L-histidine from 5-phospho-alpha-D-ribose 1-diphosphate: step 5/9. Its function is as follows. IGPS catalyzes the conversion of PRFAR and glutamine to IGP, AICAR and glutamate. The HisH subunit catalyzes the hydrolysis of glutamine to glutamate and ammonia as part of the synthesis of IGP and AICAR. The resulting ammonia molecule is channeled to the active site of HisF. This is Imidazole glycerol phosphate synthase subunit HisH from Picrophilus torridus (strain ATCC 700027 / DSM 9790 / JCM 10055 / NBRC 100828 / KAW 2/3).